The following is a 389-amino-acid chain: Arrestin-C (389 aa).

It belongs to the arrestin family. Retina and pineal gland.

Functionally, may play a role in an as yet undefined retina-specific signal transduction. Could bind to photoactivated-phosphorylated red/green opsins. In Aquarana catesbeiana (American bullfrog), this protein is Arrestin-C (arr3).